Here is a 185-residue protein sequence, read N- to C-terminus: Phospholipase A2 inhibitor 25 kDa subunit (185 aa).

8 disulfides stabilise this stretch: Cys3–Cys27, Cys6–Cys13, Cys20–Cys48, Cys54–Cys75, Cys76–Cys81, Cys101–Cys126, Cys119–Cys146, and Cys152–Cys172.

Belongs to the CNF-like-inhibitor family. In terms of assembly, heterodimer with phospholipase A2 inhibitor 31 kDa. Expressed by the liver.

Its subcellular location is the secreted. Functionally, inhibits the enzymatic activity of phospholipase A2. The chain is Phospholipase A2 inhibitor 25 kDa subunit from Naja kaouthia (Monocled cobra).